The primary structure comprises 500 residues: Low-density lipoprotein receptor-related protein 11 (500 aa).

The signal sequence occupies residues 1-37 (MASVAQESAGSQRRLPPRHGALRGLLLLCLWLPSGRA). Topologically, residues 38-450 (ALPPAAPLSE…GGEHPAPETG (413 aa)) are extracellular. In terms of domain architecture, MANSC spans 99-184 (AMPDAIIRTK…FALHSGYSSY (86 aa)). 2 N-linked (GlcNAc...) asparagine glycosylation sites follow: Asn164 and Asn291. Residues 210-305 (PLSKAGQDVV…VLRAAYSTGG (96 aa)) form the PKD domain. Residues 309 to 345 (TCSRYHFFCDDGCCIDITLACDGVQQCPDGSDEDFCQ) form the LDL-receptor class A domain. 3 disulfide bridges follow: Cys310–Cys322, Cys317–Cys335, and Cys329–Cys344. Residues 358–445 (AASPALPRTT…KGDGGGGEHP (88 aa)) form a disordered region. Asn401 carries an N-linked (GlcNAc...) asparagine glycan. A helical transmembrane segment spans residues 451–473 (AVLPLALGLAITALLLLMVACRL). Topologically, residues 474–500 (RLVKQKLKKARPITSEESDYLINGMYL) are cytoplasmic. Ser491 carries the post-translational modification Phosphoserine.

Belongs to the LDLR family.

It localises to the membrane. The protein is Low-density lipoprotein receptor-related protein 11 (LRP11) of Homo sapiens (Human).